The primary structure comprises 63 residues: Large ribosomal subunit protein bL28 (63 aa).

Belongs to the bacterial ribosomal protein bL28 family.

This chain is Large ribosomal subunit protein bL28, found in Kosmotoga olearia (strain ATCC BAA-1733 / DSM 21960 / TBF 19.5.1).